A 199-amino-acid polypeptide reads, in one-letter code: Fe/S biogenesis protein NfuA (199 aa).

Residues C151 and C154 each contribute to the [4Fe-4S] cluster site.

Belongs to the NfuA family. Homodimer. Requires [4Fe-4S] cluster as cofactor.

Its function is as follows. Involved in iron-sulfur cluster biogenesis. Binds a 4Fe-4S cluster, can transfer this cluster to apoproteins, and thereby intervenes in the maturation of Fe/S proteins. Could also act as a scaffold/chaperone for damaged Fe/S proteins. In Xanthomonas oryzae pv. oryzae (strain PXO99A), this protein is Fe/S biogenesis protein NfuA.